We begin with the raw amino-acid sequence, 281 residues long: Probable endonuclease 4 (281 aa).

Positions 69, 109, 145, 179, 182, 216, 229, 231, and 261 each coordinate Zn(2+).

It belongs to the AP endonuclease 2 family. Zn(2+) is required as a cofactor.

The catalysed reaction is Endonucleolytic cleavage to 5'-phosphooligonucleotide end-products.. In terms of biological role, endonuclease IV plays a role in DNA repair. It cleaves phosphodiester bonds at apurinic or apyrimidinic (AP) sites, generating a 3'-hydroxyl group and a 5'-terminal sugar phosphate. This Glaesserella parasuis serovar 5 (strain SH0165) (Haemophilus parasuis) protein is Probable endonuclease 4.